The chain runs to 446 residues: NADH-ubiquinone oxidoreductase chain 4 (446 aa).

13 helical membrane passes run 4 to 24 (IIFF…YWMV), 56 to 76 (MLSY…LLAS), 93 to 113 (IIIL…FMFY), 114 to 134 (LFFE…GYQP), 139 to 159 (AGLY…IGIF), 182 to 202 (LLYF…LVHL), 218 to 238 (ILAG…ISFL), 245 to 265 (YSFV…LVCL), 272 to 292 (ALIA…LLTM), 297 to 317 (LCGS…LFCL), 330 to 350 (MLIN…WFLL), 373 to 393 (IVSW…FSAA), and 426 to 446 (LLHW…MLWL).

The protein belongs to the complex I subunit 4 family.

Its subcellular location is the mitochondrion membrane. It catalyses the reaction a ubiquinone + NADH + 5 H(+)(in) = a ubiquinol + NAD(+) + 4 H(+)(out). Core subunit of the mitochondrial membrane respiratory chain NADH dehydrogenase (Complex I) that is believed to belong to the minimal assembly required for catalysis. Complex I functions in the transfer of electrons from NADH to the respiratory chain. The immediate electron acceptor for the enzyme is believed to be ubiquinone. The chain is NADH-ubiquinone oxidoreductase chain 4 (mt:ND4) from Drosophila melanogaster (Fruit fly).